We begin with the raw amino-acid sequence, 418 residues long: Tyrosine--tRNA ligase (418 aa).

Position 39 (Y39) interacts with L-tyrosine. Positions 44–53 (CTAASLHVGH) match the 'HIGH' region motif. The L-tyrosine site is built by Y176 and Q180. The 'KMSKS' region motif lies at 236–240 (KMGKT). Residue K239 participates in ATP binding. The 69-residue stretch at 350-418 (IGVLVAFAEK…KKKHVLLRLA (69 aa)) folds into the S4 RNA-binding domain.

The protein belongs to the class-I aminoacyl-tRNA synthetase family. TyrS type 1 subfamily. Homodimer.

It localises to the cytoplasm. The enzyme catalyses tRNA(Tyr) + L-tyrosine + ATP = L-tyrosyl-tRNA(Tyr) + AMP + diphosphate + H(+). In terms of biological role, catalyzes the attachment of tyrosine to tRNA(Tyr) in a two-step reaction: tyrosine is first activated by ATP to form Tyr-AMP and then transferred to the acceptor end of tRNA(Tyr). The sequence is that of Tyrosine--tRNA ligase from Rhodopseudomonas palustris (strain ATCC BAA-98 / CGA009).